Consider the following 361-residue polypeptide: tRNA/tmRNA (uracil-C(5))-methyltransferase (361 aa).

S-adenosyl-L-methionine contacts are provided by Q185, Y213, N218, E234, and D294. The active-site Nucleophile is C319. The active-site Proton acceptor is the E353.

The protein belongs to the class I-like SAM-binding methyltransferase superfamily. RNA M5U methyltransferase family. TrmA subfamily.

It catalyses the reaction uridine(54) in tRNA + S-adenosyl-L-methionine = 5-methyluridine(54) in tRNA + S-adenosyl-L-homocysteine + H(+). The enzyme catalyses uridine(341) in tmRNA + S-adenosyl-L-methionine = 5-methyluridine(341) in tmRNA + S-adenosyl-L-homocysteine + H(+). Dual-specificity methyltransferase that catalyzes the formation of 5-methyluridine at position 54 (m5U54) in all tRNAs, and that of position 341 (m5U341) in tmRNA (transfer-mRNA). This is tRNA/tmRNA (uracil-C(5))-methyltransferase from Pseudomonas savastanoi pv. phaseolicola (strain 1448A / Race 6) (Pseudomonas syringae pv. phaseolicola (strain 1448A / Race 6)).